The following is a 362-amino-acid chain: HLA class I histocompatibility antigen, B alpha chain (362 aa).

Residues 1 to 24 (MLVMAPRTVLLLLSAALALTETWA) form the signal peptide. Residues 3–11 (VMAPRTVLL) form a VL9 epitope region. Residues 25-114 (GSHSMRYFYT…LRGYYNQSEA (90 aa)) are alpha-1. The Extracellular segment spans residues 25–309 (GSHSMRYFYT…PSSQSTVPIV (285 aa)). Asparagine 87 is an a peptide antigen binding site. The Bw6 motif signature appears at 101-107 (SLRNLRG). Position 108 (tyrosine 108) interacts with a peptide antigen. An N-linked (GlcNAc...) asparagine glycan is attached at asparagine 110. Residues 115-206 (GSHTLQSMYG…ENGKDKLERA (92 aa)) form an alpha-2 region. A disulfide bridge connects residues cysteine 125 and cysteine 188. A peptide antigen is bound by residues threonine 167, lysine 170, glutamate 176, tyrosine 183, and tyrosine 195. An alpha-3 region spans residues 207–298 (DPPKTHVTHH…GLPKPLTLRW (92 aa)). Residues 209–295 (PKTHVTHHPI…QHEGLPKPLT (87 aa)) form the Ig-like C1-type domain. Cysteine 227 and cysteine 283 are oxidised to a cystine. Residues 299 to 309 (EPSSQSTVPIV) form a connecting peptide region. A helical transmembrane segment spans residues 310–333 (GIVAGLAVLAVVVIGAVVAAVMCR). The Cytoplasmic segment spans residues 334–362 (RKSSGGKGGSYSQAACSDSAQGSDVSLTA). The tract at residues 337-362 (SGGKGGSYSQAACSDSAQGSDVSLTA) is disordered. Positions 346–362 (QAACSDSAQGSDVSLTA) are enriched in polar residues.

In terms of assembly, heterotrimer that consists of an alpha chain HLA-B, a beta chain B2M and a peptide (peptide-HLA-B-B2M). Early in biogenesis, HLA-B-B2M dimer interacts with the components of the peptide-loading complex composed of TAPBP, TAP1-TAP2, TAPBPL, PDIA3/ERP57 and CALR. Interacts with TAP1-TAP2 transporter via TAPBP; this interaction is obligatory for the loading of peptide epitopes delivered to the ER by TAP1-TAP2 transporter. Interacts with TAPBPL; TAPBPL binds peptide-free HLA-B-B2M complexes or those loaded with low affinity peptides, likely facilitating peptide exchange for higher affinity peptides. Only optimally assembled peptide-HLA-B-B2M trimer translocates to the surface of antigen-presenting cells, where it interacts with TCR and CD8 coreceptor on the surface of T cells. HLA-B (via polymorphic alpha-1 and alpha-2 domains) interacts with antigen-specific TCR (via CDR1, CDR2 and CDR3 domains). One HLA-B molecule (mainly via nonpolymorphic alpha-3 domain) interacts with one CD8A homodimer (via CDR-like loop); this interaction ensures peptide-HLA-B-B2M recognition by CD8-positive T cells only. Allele B*57:01 interacts (via Bw4 motif) with KIR3DL1 (via Ig-like C2-type domain); this interaction may interfere with peptide binding. Allele B*46:01 interacts with KIR2DL3. (Microbial infection) Interacts with HTLV-1 accessory protein p12I.

The protein resides in the cell membrane. The protein localises to the endoplasmic reticulum membrane. Antigen-presenting major histocompatibility complex class I (MHCI) molecule. In complex with B2M/beta 2 microglobulin displays primarily viral and tumor-derived peptides on antigen-presenting cells for recognition by alpha-beta T cell receptor (TCR) on HLA-B-restricted CD8-positive T cells, guiding antigen-specific T cell immune response to eliminate infected or transformed cells. May also present self-peptides derived from the signal sequence of secreted or membrane proteins, although T cells specific for these peptides are usually inactivated to prevent autoreactivity. Both the peptide and the MHC molecule are recognized by TCR, the peptide is responsible for the fine specificity of antigen recognition and MHC residues account for the MHC restriction of T cells. Typically presents intracellular peptide antigens of 8 to 13 amino acids that arise from cytosolic proteolysis via constitutive proteasome and IFNG-induced immunoproteasome. Can bind different peptides containing allele-specific binding motifs, which are mainly defined by anchor residues at position 2 and 9. Its function is as follows. Allele B*07:02: Displays peptides sharing a common signature motif, namely a Pro residue at position 2 and mainly a Leu anchor residue at the C-terminus. Presents a long peptide (APRGPHGGAASGL) derived from the cancer-testis antigen CTAG1A/NY-ESO-1, eliciting a polyclonal CD8-positive T cell response against tumor cells. Presents viral epitopes derived from HIV-1 gag-pol (TPQDLNTML) and Nef (RPQVPLRPM). Presents an immunodominant epitope derived from SARS-CoV-2 N/nucleoprotein (SPRWYFYYL). Displays self-peptides including a peptide derived from the signal sequence of HLA-DPB1 (APRTVALTA). Functionally, allele B*08:01: Presents to CD8-positive T cells viral epitopes derived from EBV/HHV-4 EBNA3 (QAKWRLQTL), eliciting cytotoxic T cell response. In terms of biological role, allele B*13:02: Presents multiple HIV-1 epitopes derived from gag (RQANFLGKI, GQMREPRGSDI), nef (RQDILDLWI), gag-pol (RQYDQILIE, GQGQWTYQI) and rev (LQLPPLERL), all having in common a Gln residue at position 2 and mainly hydrophobic amino acids Leu, Ile or Val at the C-terminus. Associated with successful control of HIV-1 infection. Allele B*18:01: Preferentially presents octomeric and nonameric peptides sharing a common motif, namely a Glu at position 2 and Phe or Tyr anchor residues at the C-terminus. Presents an EBV/HHV-4 epitope derived from BZLF1 (SELEIKRY). May present to CD8-positive T cells an antigenic peptide derived from MAGEA3 (MEVDPIGHLY), triggering an anti-tumor immune response. May display a broad repertoire of self-peptides with a preference for peptides derived from RNA-binding proteins. Its function is as follows. Allele B*27:05: Presents to CD8-positive T cells immunodominant viral epitopes derived from HCV POLG (ARMILMTHF), HIV-1 gag (KRWIILGLNK), IAV NP (SRYWAIRTR), SARS-CoV-2 N/nucleoprotein (QRNAPRITF), EBV/HHV-4 EBNA4 (HRCQAIRKK) and EBV/HHV-4 EBNA6 (RRIYDLIEL), conferring longterm protection against viral infection. Can present self-peptides derived from cytosolic and nuclear proteins. All peptides carry an Arg at position 2. The peptide-bound form interacts with NK cell inhibitory receptor KIR3DL1 and inhibits NK cell activation in a peptide-specific way, being particularly sensitive to the nature of the amino acid side chain at position 8 of the antigenic peptide. KIR3DL1 fails to recognize HLA-B*27:05 in complex with B2M and EBV/HHV-4 EBNA6 (RRIYDLIEL) peptide, which can lead to increased activation of NK cells during infection. May present an altered repertoire of peptides in the absence of TAP1-TAP2 and TAPBPL. Functionally, allele B*40:01: Presents immunodominant viral epitopes derived from EBV/HHV-4 LMP2 (IEDPPFNSL) and SARS-CoV-2 N/nucleoprotein (MEVTPSGTWL), triggering memory CD8-positive T cell response. Displays self-peptides sharing a signature motif, namely a Glu at position 2 and a Leu anchor residue at the C-terminus. In terms of biological role, allele B*41:01: Displays self-peptides sharing a signature motif, namely a Glu at position 2 and Ala or Pro anchor residues at the C-terminus. Allele B*44:02: Presents immunodominant viral epitopes derived from EBV/HHV-4 EBNA4 (VEITPYKPTW) and EBNA6 (AEGGVGWRHW, EENLLDFVRF), triggering memory CD8-positive T cell response. Displays self-peptides sharing a signature motif, namely a Glu at position 2 and Phe, Tyr or Trp anchor residues at the C-terminus. Its function is as follows. Allele B*45:01: Displays self-peptides sharing a signature motif, namely a Glu at position 2 and Ala or Pro anchor residues at the C-terminus. Functionally, allele B*46:01: Preferentially presents nonameric peptides sharing a signature motif, namely Ala and Leu at position 2 and Tyr, Phe, Leu, or Met anchor residues at the C-terminus. The peptide-bound form interacts with KIR2DL3 and inhibits NK cell cytotoxic response in a peptide-specific way. In terms of biological role, allele B*47:01: Displays self-peptides sharing a signature motif, namely an Asp at position 2 and Leu or Met anchor residues at the C-terminus. Allele B*49:01: Displays self-peptides sharing a signature motif, namely a Glu at position 2 and Ile or Val anchor residues at the C-terminus. Its function is as follows. Allele B*50:01: Displays self-peptides sharing a signature motif, namely a Glu at position 2 and Ala or Pro anchor residues at the C-terminus. Functionally, allele B*51:01: Presents an octomeric HIV-1 epitope derived from gag-pol (TAFTIPSI) to the public TRAV17/TRBV7-3 TCR clonotype, strongly suppressing HIV-1 replication. In terms of biological role, allele B*54:01: Displays peptides sharing a common signature motif, namely a Pro residue at position 2 and Ala anchor residue at the C-terminus. Allele B*55:01: Displays peptides sharing a common signature motif, namely a Pro residue at position 2 and Ala anchor residue at the C-terminus. Its function is as follows. Allele B*56:01: Displays peptides sharing a common signature motif, namely a Pro residue at position 2 and Ala anchor residue at the C-terminus. Functionally, allele B*57:01: The peptide-bound form recognizes KIR3DL1 and inhibits NK cell cytotoxic response. Presents HIV gag peptides (immunodominant KAFSPEVIPMF and subdominant KALGPAATL epitopes) predominantly to CD8-positive T cell clones expressing a TRAV41-containing TCR, triggering HLA-B-restricted T cell responses. In terms of biological role, allele B*67:01: Displays peptides sharing a common signature motif, namely a Pro residue at position 2 and Leu anchor residue at the C-terminus. In Homo sapiens (Human), this protein is HLA class I histocompatibility antigen, B alpha chain.